The sequence spans 442 residues: ATP-dependent protease ATPase subunit HslU (442 aa).

Residues Ile-18, 60-65, Asp-255, Glu-320, and Arg-392 each bind ATP; that span reads GVGKTE.

Belongs to the ClpX chaperone family. HslU subfamily. In terms of assembly, a double ring-shaped homohexamer of HslV is capped on each side by a ring-shaped HslU homohexamer. The assembly of the HslU/HslV complex is dependent on binding of ATP.

Its subcellular location is the cytoplasm. ATPase subunit of a proteasome-like degradation complex; this subunit has chaperone activity. The binding of ATP and its subsequent hydrolysis by HslU are essential for unfolding of protein substrates subsequently hydrolyzed by HslV. HslU recognizes the N-terminal part of its protein substrates and unfolds these before they are guided to HslV for hydrolysis. The chain is ATP-dependent protease ATPase subunit HslU from Aeromonas salmonicida (strain A449).